A 317-amino-acid chain; its full sequence is tRNA dimethylallyltransferase (317 aa).

14-21 (GPTASGKT) is an ATP binding site. Residue 16 to 21 (TASGKT) participates in substrate binding. 2 interaction with substrate tRNA regions span residues 39 to 42 (DSAL) and 163 to 167 (QRIQR).

This sequence belongs to the IPP transferase family. In terms of assembly, monomer. Requires Mg(2+) as cofactor.

The catalysed reaction is adenosine(37) in tRNA + dimethylallyl diphosphate = N(6)-dimethylallyladenosine(37) in tRNA + diphosphate. Functionally, catalyzes the transfer of a dimethylallyl group onto the adenine at position 37 in tRNAs that read codons beginning with uridine, leading to the formation of N6-(dimethylallyl)adenosine (i(6)A). The chain is tRNA dimethylallyltransferase from Stenotrophomonas maltophilia (strain R551-3).